Consider the following 964-residue polypeptide: Translation initiation factor IF-2 (964 aa).

The disordered stretch occupies residues 26-375 (AAGVSKRSPE…QNNQHAFQAP (350 aa)). 7 stretches are compositionally biased toward basic and acidic residues: residues 49–60 (YLKRSHGAREDS), 91–103 (VRPDDAPRAEAPK), 118–154 (AKPEPKPEPKVEAKPEPKPEPKPEPKVEAKPEPKPEP), 174–206 (IAAREAEEKRQAAFRARQEALMREKIEREERRQ), 225–236 (PQREERRDDRRG), 243–252 (RGPRGNDNRG), and 328–339 (KGGERSWDDNKK). A tr-type G domain is found at 464–633 (PRSPVVTVMG…LLQAEVLELK (170 aa)). The G1 stretch occupies residues 473–480 (GHVDHGKT). 473–480 (GHVDHGKT) lines the GTP pocket. Positions 498 to 502 (GITQH) are G2. Residues 519–522 (DTPG) are G3. Residues 519-523 (DTPGH) and 573-576 (NKID) each bind GTP. The interval 573–576 (NKID) is G4. The interval 609-611 (SAK) is G5.

It belongs to the TRAFAC class translation factor GTPase superfamily. Classic translation factor GTPase family. IF-2 subfamily.

The protein localises to the cytoplasm. In terms of biological role, one of the essential components for the initiation of protein synthesis. Protects formylmethionyl-tRNA from spontaneous hydrolysis and promotes its binding to the 30S ribosomal subunits. Also involved in the hydrolysis of GTP during the formation of the 70S ribosomal complex. This is Translation initiation factor IF-2 from Chromobacterium violaceum (strain ATCC 12472 / DSM 30191 / JCM 1249 / CCUG 213 / NBRC 12614 / NCIMB 9131 / NCTC 9757 / MK).